Here is a 348-residue protein sequence, read N- to C-terminus: S-adenosylmethionine:tRNA ribosyltransferase-isomerase (348 aa).

The protein belongs to the QueA family. Monomer.

It is found in the cytoplasm. The enzyme catalyses 7-aminomethyl-7-carbaguanosine(34) in tRNA + S-adenosyl-L-methionine = epoxyqueuosine(34) in tRNA + adenine + L-methionine + 2 H(+). It participates in tRNA modification; tRNA-queuosine biosynthesis. Functionally, transfers and isomerizes the ribose moiety from AdoMet to the 7-aminomethyl group of 7-deazaguanine (preQ1-tRNA) to give epoxyqueuosine (oQ-tRNA). This Cytophaga hutchinsonii (strain ATCC 33406 / DSM 1761 / CIP 103989 / NBRC 15051 / NCIMB 9469 / D465) protein is S-adenosylmethionine:tRNA ribosyltransferase-isomerase.